The chain runs to 59 residues: Large ribosomal subunit protein uL30 (59 aa).

This sequence belongs to the universal ribosomal protein uL30 family. In terms of assembly, part of the 50S ribosomal subunit.

This is Large ribosomal subunit protein uL30 from Syntrophotalea carbinolica (strain DSM 2380 / NBRC 103641 / GraBd1) (Pelobacter carbinolicus).